The chain runs to 314 residues: 4-hydroxy-3-methylbut-2-enyl diphosphate reductase (314 aa).

Position 12 (cysteine 12) interacts with [4Fe-4S] cluster. (2E)-4-hydroxy-3-methylbut-2-enyl diphosphate contacts are provided by histidine 41 and histidine 74. 2 residues coordinate dimethylallyl diphosphate: histidine 41 and histidine 74. Residues histidine 41 and histidine 74 each contribute to the isopentenyl diphosphate site. A [4Fe-4S] cluster-binding site is contributed by cysteine 96. A (2E)-4-hydroxy-3-methylbut-2-enyl diphosphate-binding site is contributed by histidine 124. Histidine 124 serves as a coordination point for dimethylallyl diphosphate. An isopentenyl diphosphate-binding site is contributed by histidine 124. Catalysis depends on glutamate 126, which acts as the Proton donor. Threonine 167 serves as a coordination point for (2E)-4-hydroxy-3-methylbut-2-enyl diphosphate. Residue cysteine 197 participates in [4Fe-4S] cluster binding. 4 residues coordinate (2E)-4-hydroxy-3-methylbut-2-enyl diphosphate: serine 225, serine 226, asparagine 227, and serine 269. 4 residues coordinate dimethylallyl diphosphate: serine 225, serine 226, asparagine 227, and serine 269. Isopentenyl diphosphate-binding residues include serine 225, serine 226, asparagine 227, and serine 269.

The protein belongs to the IspH family. It depends on [4Fe-4S] cluster as a cofactor.

The enzyme catalyses isopentenyl diphosphate + 2 oxidized [2Fe-2S]-[ferredoxin] + H2O = (2E)-4-hydroxy-3-methylbut-2-enyl diphosphate + 2 reduced [2Fe-2S]-[ferredoxin] + 2 H(+). The catalysed reaction is dimethylallyl diphosphate + 2 oxidized [2Fe-2S]-[ferredoxin] + H2O = (2E)-4-hydroxy-3-methylbut-2-enyl diphosphate + 2 reduced [2Fe-2S]-[ferredoxin] + 2 H(+). Its pathway is isoprenoid biosynthesis; dimethylallyl diphosphate biosynthesis; dimethylallyl diphosphate from (2E)-4-hydroxy-3-methylbutenyl diphosphate: step 1/1. It functions in the pathway isoprenoid biosynthesis; isopentenyl diphosphate biosynthesis via DXP pathway; isopentenyl diphosphate from 1-deoxy-D-xylulose 5-phosphate: step 6/6. In terms of biological role, catalyzes the conversion of 1-hydroxy-2-methyl-2-(E)-butenyl 4-diphosphate (HMBPP) into a mixture of isopentenyl diphosphate (IPP) and dimethylallyl diphosphate (DMAPP). Acts in the terminal step of the DOXP/MEP pathway for isoprenoid precursor biosynthesis. This Aliivibrio fischeri (strain ATCC 700601 / ES114) (Vibrio fischeri) protein is 4-hydroxy-3-methylbut-2-enyl diphosphate reductase.